The following is a 253-amino-acid chain: Transposase for insertion sequence element IS904 (253 aa).

The Integrase catalytic domain maps to 90–253 (KATAPNKVWL…SPKDFEKYNS (164 aa)).

Belongs to the transposase IS3/IS150/IS904 family.

Functionally, involved in the transposition of the insertion sequence. The chain is Transposase for insertion sequence element IS904 (nisX1) from Lactococcus lactis subsp. lactis (strain IL1403) (Streptococcus lactis).